The primary structure comprises 545 residues: DNA mismatch repair protein MutL (545 aa).

The interval 516–545 (GRRSGARGGGEARPRPQEESFPEAPLPREP) is disordered.

This sequence belongs to the DNA mismatch repair MutL/HexB family.

This protein is involved in the repair of mismatches in DNA. It is required for dam-dependent methyl-directed DNA mismatch repair. May act as a 'molecular matchmaker', a protein that promotes the formation of a stable complex between two or more DNA-binding proteins in an ATP-dependent manner without itself being part of a final effector complex. The sequence is that of DNA mismatch repair protein MutL from Thermus thermophilus (strain ATCC BAA-163 / DSM 7039 / HB27).